The primary structure comprises 551 residues: Glucans biosynthesis protein D (551 aa).

The segment at residues 1 to 32 (MDRRRFIKGSMAMAAVCGTSGIASLFSQAAFA) is a signal peptide (tat-type signal).

The protein belongs to the OpgD/OpgG family. Post-translationally, predicted to be exported by the Tat system. The position of the signal peptide cleavage has not been experimentally proven.

It localises to the periplasm. Its pathway is glycan metabolism; osmoregulated periplasmic glucan (OPG) biosynthesis. In terms of biological role, probably involved in the control of the structural glucose backbone of osmoregulated periplasmic glucans (OPGs). The chain is Glucans biosynthesis protein D from Escherichia coli O127:H6 (strain E2348/69 / EPEC).